The primary structure comprises 328 residues: UPF0421 protein SAR1980 (328 aa).

4 consecutive transmembrane segments (helical) span residues 19-39, 61-81, 108-128, and 132-152; these read IAIF…IYAI, LPAT…FGDQ, VAVL…IFNF, and TLTA…VFPP.

Belongs to the UPF0421 family.

Its subcellular location is the cell membrane. The polypeptide is UPF0421 protein SAR1980 (Staphylococcus aureus (strain MRSA252)).